The following is a 135-amino-acid chain: D-ribose pyranase (135 aa).

H20 acts as the Proton donor in catalysis. Residues D28, H102, and 124-126 each bind substrate; that span reads YSN.

This sequence belongs to the RbsD / FucU family. RbsD subfamily. As to quaternary structure, homodecamer.

It localises to the cytoplasm. The enzyme catalyses beta-D-ribopyranose = beta-D-ribofuranose. It functions in the pathway carbohydrate metabolism; D-ribose degradation; D-ribose 5-phosphate from beta-D-ribopyranose: step 1/2. Its function is as follows. Catalyzes the interconversion of beta-pyran and beta-furan forms of D-ribose. This chain is D-ribose pyranase, found in Thermotoga maritima (strain ATCC 43589 / DSM 3109 / JCM 10099 / NBRC 100826 / MSB8).